The sequence spans 625 residues: Vitamin B12 transporter BtuB (625 aa).

The signal sequence occupies residues 1-21; sequence MTIKKYTLLTALSVTAFSGWA. The short motif at 31–38 is the TonB box element; it reads DEMVVTAN. The TBDR plug domain occupies 43-157; sequence PKSSVLAPVD…IGGVINILTG (115 aa). Cyanocob(III)alamin-binding positions include Ser90, Asn97, and 115–116; that span reads IT. A TBDR beta-barrel domain is found at 160–625; sequence KPGTTLSAGL…EYYFTGSYNF (466 aa). The next 3 beta stranded transmembrane spans lie at 163 to 170, 174 to 183, and 189 to 200; these read TTLSAGLG, YQTYDGSTQQ, and TTVTLAGNYTYS. Ca(2+)-binding residues include Asp204, Gln217, Asp219, and Asp221. Transmembrane regions (beta stranded) follow at residues 223–233 and 238–254; these read FMGKMLWAGLE and EQFNGFARVYGFDNRSD. Ca(2+) is bound by residues Tyr255, Asp256, and Asp269. A run of 14 beta stranded transmembrane segments spans residues 271 to 285, 287 to 304, 317 to 333, 336 to 345, 363 to 379, 381 to 391, 395 to 410, 413 to 427, 445 to 454, 460 to 469, 484 to 501, 505 to 520, 528 to 540, and 546 to 561; these read RKLSSRTYDTGLRYK, GIYASQFIASYNRTKDYN, SLDEAEQYNLQWGNTFQ, NGMISAGADW, FTQHNTGIYLTGQQQIS, VTLEGAVRSDD, FGWHSTWQTSAGWEFI, YRLIGSYGTAYKAPN, ESKQWEGGVE, LTWRLSAYRN, YFNINKATIKGVEWTGSF, PLSHQVTLEYLDPRNA, RRAKQQVKYQLDW, and DWSVTYQYLGQRYDKD. Ser317 provides a ligand contact to cyanocob(III)alamin. Arg528 serves as a coordination point for cyanocob(III)alamin. A cyanocob(III)alamin-binding site is contributed by Tyr562. 3 beta stranded membrane passes run 569–583, 596–607, and 613–625; these read TVELGGVSLWDLAVS, IANLFDKDYEMV, and PGREYYFTGSYNF. A TonB C-terminal box motif is present at residues 608 to 625; the sequence is YGYQTPGREYYFTGSYNF.

This sequence belongs to the TonB-dependent receptor family. BtuB (TC 1.B.14.3.1) subfamily.

The protein resides in the cell outer membrane. Functionally, involved in the active translocation of vitamin B12 (cyanocobalamin) across the outer membrane to the periplasmic space. It derives its energy for transport by interacting with the trans-periplasmic membrane protein TonB. In Yersinia pestis bv. Antiqua (strain Antiqua), this protein is Vitamin B12 transporter BtuB.